The following is a 71-amino-acid chain: UPF0437 protein asl1434 (71 aa).

Belongs to the UPF0437 family.

This Nostoc sp. (strain PCC 7120 / SAG 25.82 / UTEX 2576) protein is UPF0437 protein asl1434.